Here is a 1324-residue protein sequence, read N- to C-terminus: Ubiquitin carboxyl-terminal hydrolase 42 (1324 aa).

Disordered stretches follow at residues 1–38 (MTIVDKASESSDPSAYQNQPGSSEAVSPGDMDAGSASW) and 63–87 (YSSSSVPDKSKPSPQKDQALGDGIA). The segment covering 10–25 (SSDPSAYQNQPGSSEA) has biased composition (polar residues). Positions 63–80 (YSSSSVPDKSKPSPQKDQ) are enriched in low complexity. Serine 75 is subject to Phosphoserine. Residues 111-412 (AGLQNLGNTC…QAYVLFYIRS (302 aa)) form the USP domain. The active-site Nucleophile is the cysteine 120. Catalysis depends on histidine 371, which acts as the Proton acceptor. Disordered stretches follow at residues 452-494 (IGPQ…NRAS), 536-707 (QSQP…MPAP), 722-1026 (LSNK…RHRS), 1085-1131 (RAGL…HPDR), 1149-1254 (DRFH…VKDS), and 1275-1294 (GGFPLSGGPPLEGVGPFREK). The span at 477 to 489 (PSSSMSSPNGNSS) shows a compositional bias: low complexity. Serine 483 is subject to Phosphoserine. The segment covering 536-564 (QSQPNLHSNSLENPTKPVPSSTITNSAVQ) has biased composition (polar residues). Residues 565–576 (STSNASTMSVSS) show a composition bias toward low complexity. Positions 586–603 (ESCSQPVMNGKSKLNSSV) are enriched in polar residues. 2 positions are modified to phosphoserine: serine 754 and serine 856. Composition is skewed to basic and acidic residues over residues 938-974 (AKEKIGSLRKVDRGHYRSRRERSSSGEPARESRSKTE), 984-1013 (CPRERDRQDRHAPEHHPGHGDRLSPGERRS), 1101-1113 (RGCEPARERERHR), 1149-1158 (DRFHEHENGK), and 1165-1191 (DSVENSDSHVEKKARRSEQKDPLEEPK). Serine 1181 carries the post-translational modification Phosphoserine. Residues 1192 to 1206 (AKKHKKSKKKKKSKD) show a composition bias toward basic residues. A compositionally biased stretch (basic and acidic residues) spans 1207–1218 (KHRDRDSRHQQD). Residues serine 1219, serine 1222, and serine 1226 each carry the phosphoserine modification. Basic residues predominate over residues 1231 to 1245 (HRHKKKKKKKKRHSR). Serine 1247 is subject to Phosphoserine.

The protein belongs to the peptidase C19 family. Broadly expressed.

The catalysed reaction is Thiol-dependent hydrolysis of ester, thioester, amide, peptide and isopeptide bonds formed by the C-terminal Gly of ubiquitin (a 76-residue protein attached to proteins as an intracellular targeting signal).. Deubiquitinating enzyme which may play an important role during spermatogenesis. This is Ubiquitin carboxyl-terminal hydrolase 42 (USP42) from Homo sapiens (Human).